The primary structure comprises 137 residues: Large-conductance mechanosensitive channel (137 aa).

Transmembrane regions (helical) follow at residues 16-36 (VIDL…VDSI) and 83-103 (GNFI…FLMI).

Belongs to the MscL family. Homopentamer.

It is found in the cell inner membrane. Channel that opens in response to stretch forces in the membrane lipid bilayer. May participate in the regulation of osmotic pressure changes within the cell. The polypeptide is Large-conductance mechanosensitive channel (Methylibium petroleiphilum (strain ATCC BAA-1232 / LMG 22953 / PM1)).